Here is a 428-residue protein sequence, read N- to C-terminus: Flotillin-1 (428 aa).

Residues Ser19, Ser163, and Ser385 each carry the phosphoserine modification. Thr387 is modified (phosphothreonine).

The protein belongs to the band 7/mec-2 family. Flotillin subfamily. In terms of assembly, heterooligomeric complex of flotillin-1 and flotillin-2 and caveolin-1 and caveolin-2. Interacts with ECPAS. As to expression, high expression in brain, white adipose tissue, heart muscle, skeletal muscle and lung. Low expression in spleen, liver and testis.

Its subcellular location is the cell membrane. It is found in the endosome. The protein resides in the membrane. The protein localises to the caveola. It localises to the melanosome. Its subcellular location is the membrane raft. May act as a scaffolding protein within caveolar membranes, functionally participating in formation of caveolae or caveolae-like vesicles. The protein is Flotillin-1 (Flot1) of Mus musculus (Mouse).